Consider the following 425-residue polypeptide: Dihydroorotase (425 aa).

Zn(2+) contacts are provided by histidine 59 and histidine 61. Residues 61-63 and asparagine 93 each bind substrate; that span reads HLR. 3 residues coordinate Zn(2+): aspartate 151, histidine 178, and histidine 231. Asparagine 277 is a binding site for substrate. Aspartate 304 is a binding site for Zn(2+). The active site involves aspartate 304. Substrate-binding positions include histidine 308 and 322–323; that span reads FG.

It belongs to the metallo-dependent hydrolases superfamily. DHOase family. Class I DHOase subfamily. Zn(2+) is required as a cofactor.

The enzyme catalyses (S)-dihydroorotate + H2O = N-carbamoyl-L-aspartate + H(+). It functions in the pathway pyrimidine metabolism; UMP biosynthesis via de novo pathway; (S)-dihydroorotate from bicarbonate: step 3/3. Catalyzes the reversible cyclization of carbamoyl aspartate to dihydroorotate. This Staphylococcus epidermidis (strain ATCC 12228 / FDA PCI 1200) protein is Dihydroorotase.